Reading from the N-terminus, the 504-residue chain is Maturase K (504 aa).

Belongs to the intron maturase 2 family. MatK subfamily.

The protein localises to the plastid. The protein resides in the chloroplast. In terms of biological role, usually encoded in the trnK tRNA gene intron. Probably assists in splicing its own and other chloroplast group II introns. The polypeptide is Maturase K (Gossypium barbadense (Sea Island cotton)).